Consider the following 123-residue polypeptide: uncharacterized protein (123 aa).

A disordered region spans residues 17–74 (FQKKKKTGSQTRRTLKPQPQQLQQNLPKGHETTGHTYERVLQQQGSQERSPGLMSEDS). A Phosphothreonine modification is found at Thr30. Positions 32 to 43 (KPQPQQLQQNLP) are enriched in low complexity. The segment covering 44 to 54 (KGHETTGHTYE) has biased composition (basic and acidic residues). Ser62 carries the post-translational modification Phosphoserine.

This is an uncharacterized protein from Homo sapiens (Human).